The sequence spans 411 residues: Adenylosuccinate synthetase (411 aa).

Residues 11–17 and 39–41 each bind GTP; these read GDEGKGK and GHT. Asp12 acts as the Proton acceptor in catalysis. Residues Asp12 and Gly39 each coordinate Mg(2+). IMP-binding positions include 12-15, 37-40, Thr121, Arg135, Gln215, Thr230, and Arg294; these read DEGK and NAGH. Residue His40 is the Proton donor of the active site. 290-296 contributes to the substrate binding site; it reads TTTKRPR. GTP contacts are provided by residues Arg296, 322–324, and 400–402; these read KLD and STS.

The protein belongs to the adenylosuccinate synthetase family. Homodimer. Mg(2+) serves as cofactor.

Its subcellular location is the cytoplasm. The catalysed reaction is IMP + L-aspartate + GTP = N(6)-(1,2-dicarboxyethyl)-AMP + GDP + phosphate + 2 H(+). It participates in purine metabolism; AMP biosynthesis via de novo pathway; AMP from IMP: step 1/2. In terms of biological role, plays an important role in the de novo pathway of purine nucleotide biosynthesis. Catalyzes the first committed step in the biosynthesis of AMP from IMP. The sequence is that of Adenylosuccinate synthetase from Helicobacter pylori (strain P12).